We begin with the raw amino-acid sequence, 142 residues long: Hemoglobin subunit alpha (142 aa).

The Globin domain maps to 2–142 (VLSPADKTNI…VSTVLTSKYR (141 aa)). The residue at position 4 (serine 4) is a Phosphoserine. Lysine 8 bears the N6-succinyllysine mark. Threonine 9 is modified (phosphothreonine). Position 12 is an N6-succinyllysine (lysine 12). At lysine 17 the chain carries N6-acetyllysine; alternate. Lysine 17 bears the N6-succinyllysine; alternate mark. Position 25 is a phosphotyrosine (tyrosine 25). Serine 36 is modified (phosphoserine). N6-succinyllysine is present on lysine 41. The residue at position 50 (serine 50) is a Phosphoserine. Histidine 59 is an O2 binding site. Histidine 88 is a heme b binding site. Serine 103 carries the phosphoserine modification. The residue at position 109 (threonine 109) is a Phosphothreonine. Serine 125 is subject to Phosphoserine. Threonine 135 and threonine 138 each carry phosphothreonine. Serine 139 is modified (phosphoserine).

This sequence belongs to the globin family. Heterotetramer of two alpha chains and two beta chains. As to expression, red blood cells.

Involved in oxygen transport from the lung to the various peripheral tissues. Functionally, hemopressin acts as an antagonist peptide of the cannabinoid receptor CNR1. Hemopressin-binding efficiently blocks cannabinoid receptor CNR1 and subsequent signaling. The chain is Hemoglobin subunit alpha (HBA) from Canis latrans (Coyote).